A 106-amino-acid chain; its full sequence is uncharacterized protein (106 aa).

This is an uncharacterized protein from Enterobacteria phage T4 (Bacteriophage T4).